Here is a 265-residue protein sequence, read N- to C-terminus: Glutamate racemase (265 aa).

Residues 7–8 (DS) and 39–40 (YG) each bind substrate. Residue Cys-70 is the Proton donor/acceptor of the active site. 71 to 72 (NT) lines the substrate pocket. The Proton donor/acceptor role is filled by Cys-179. 180–181 (TH) provides a ligand contact to substrate.

This sequence belongs to the aspartate/glutamate racemases family.

The catalysed reaction is L-glutamate = D-glutamate. It participates in cell wall biogenesis; peptidoglycan biosynthesis. Provides the (R)-glutamate required for cell wall biosynthesis. This is Glutamate racemase from Gloeobacter violaceus (strain ATCC 29082 / PCC 7421).